Reading from the N-terminus, the 608-residue chain is Afamin (608 aa).

Positions 1 to 21 (MRHLKLTGFIFFLLSLTESLA) are cleaved as a signal peptide. Albumin domains lie at 22 to 210 (LPTK…APIT), 211 to 403 (QYLK…KFNE), and 404 to 599 (TTER…KTGD). Asn-33 is a glycosylation site (N-linked (GlcNAc...) asparagine). 10 disulfide bridges follow: Cys-77/Cys-86, Cys-99/Cys-114, Cys-113/Cys-124, Cys-148/Cys-193, Cys-224/Cys-270, Cys-269/Cys-277, Cys-289/Cys-303, Cys-302/Cys-313, Cys-340/Cys-385, and Cys-384/Cys-393. Asn-109 carries N-linked (GlcNAc...) asparagine glycosylation. Asn-153 is a glycosylation site (N-linked (GlcNAc...) asparagine). The interval 215-319 (ALSSYQRNVC…RADCIINANK (105 aa)) is binding pocket for hydrophobic ligands. N-linked (GlcNAc...) asparagine glycosylation occurs at Asn-402. 5 cysteine pairs are disulfide-bonded: Cys-416–Cys-462, Cys-461–Cys-470, Cys-483–Cys-499, Cys-498–Cys-509, and Cys-580–Cys-589. An N-linked (GlcNAc...) asparagine glycan is attached at Asn-488. A disordered region spans residues 585 to 608 (KPEACFSPESSKTGDVSQDAEKQR).

Belongs to the ALB/AFP/VDB family. As to quaternary structure, forms a 1:1 complex with Wnt family members; interacts with WNT1, WNT2B, WNT3, WNT3A, WNT5A, WNT7A, WNT7B, WNT8, WNT9A, WNT9B, WNT10A and WNT10B. N-glycosylated; more than 90% of the glycans are sialylated.

It is found in the secreted. In terms of biological role, functions as a carrier for hydrophobic molecules in body fluids. Essential for the solubility and activity of lipidated Wnt family members, including WNT1, WNT2B, WNT3, WNT3A, WNT5A, WNT7A, WNT7B, WNT8, WNT9A, WNT9B, WNT10A and WNT10B. Binds vitamin E. May transport vitamin E in body fluids under conditions where the lipoprotein system is not sufficient. May be involved in the transport of vitamin E across the blood-brain barrier. This chain is Afamin (Afm), found in Rattus norvegicus (Rat).